The sequence spans 549 residues: Arginine--tRNA ligase (549 aa).

Positions 132–142 match the 'HIGH' region motif; the sequence is ANPTGPLHIGH.

The protein belongs to the class-I aminoacyl-tRNA synthetase family. Monomer.

The protein localises to the cytoplasm. The catalysed reaction is tRNA(Arg) + L-arginine + ATP = L-arginyl-tRNA(Arg) + AMP + diphosphate. This is Arginine--tRNA ligase from Paenarthrobacter aurescens (strain TC1).